A 191-amino-acid chain; its full sequence is Small ribosomal subunit protein uS7 (191 aa).

Belongs to the universal ribosomal protein uS7 family. As to quaternary structure, part of the 30S ribosomal subunit.

In terms of biological role, one of the primary rRNA binding proteins, it binds directly to 16S rRNA where it nucleates assembly of the head domain of the 30S subunit. Is located at the subunit interface close to the decoding center. This is Small ribosomal subunit protein uS7 from Methanocaldococcus jannaschii (strain ATCC 43067 / DSM 2661 / JAL-1 / JCM 10045 / NBRC 100440) (Methanococcus jannaschii).